Here is a 369-residue protein sequence, read N- to C-terminus: Isocitrate dehydrogenase [NAD] subunit 2, mitochondrial (369 aa).

Residues 1-15 constitute a mitochondrion transit peptide; it reads MLRNTFFRNTSRRFL. The residue at position 105 (T105) is a Phosphothreonine. Substrate contacts are provided by R119, R129, and R150. T153 is subject to Phosphothreonine. A substrate-binding site is contributed by D237. Mg(2+) contacts are provided by D237, D263, and D267. 2 positions are modified to phosphothreonine: T327 and T349.

Belongs to the isocitrate and isopropylmalate dehydrogenases family. Octamer of two non-identical subunits IDH1 and IDH2. It depends on Mg(2+) as a cofactor. Mn(2+) is required as a cofactor.

Its subcellular location is the mitochondrion matrix. It carries out the reaction D-threo-isocitrate + NAD(+) = 2-oxoglutarate + CO2 + NADH. Its activity is regulated as follows. Allosterically regulated by several compounds including AMP, NAD(+), and citrate. Performs an essential role in the oxidative function of the citric acid cycle. Also binds RNA; specifically to the 5'-untranslated leaders of mitochondrial mRNAs. In Saccharomyces cerevisiae (strain ATCC 204508 / S288c) (Baker's yeast), this protein is Isocitrate dehydrogenase [NAD] subunit 2, mitochondrial (IDH2).